Consider the following 97-residue polypeptide: Small cell adhesion glycoprotein (97 aa).

The Extracellular segment spans residues 1-36 (MNNLPATPSPEELMTTPVFQAPETMSPQAEEASTAL). Thr7 carries an O-linked (GalNAc...) threonine glycan. O-linked (GalNAc...) serine glycosylation is present at Ser9. Thr15, Thr16, and Thr24 each carry an O-linked (GalNAc...) threonine glycan. Residue Ser26 is glycosylated (O-linked (GalNAc...) serine). The helical; Signal-anchor for type III membrane protein transmembrane segment at 37-57 (IAVVITVVFLTLLSVVTLIFF) threads the bilayer. The Cytoplasmic portion of the chain corresponds to 58 to 97 (YLYKNKGSYVTYEPAEGEPSAILQMETDSAKGKEKEEYFI).

Belongs to the SMAGP family. Post-translationally, O-glycosylated. The O-glycan is modified with sialic acid residues. Detected in brain (at protein level). Highly expressed in kidney and placenta. Detected in skin, breast, heart, lung, liver, prostate, spleen, small intestine, colon and stomach.

The protein resides in the cell membrane. The protein localises to the cytoplasmic vesicle membrane. May play a role in epithelial cell-cell contacts. May play a role in tumor invasiveness and metastasis formation. The sequence is that of Small cell adhesion glycoprotein (Smagp) from Rattus norvegicus (Rat).